A 107-amino-acid polypeptide reads, in one-letter code: Nucleoid-associated protein PPA0205 (107 aa).

It belongs to the YbaB/EbfC family. As to quaternary structure, homodimer.

It is found in the cytoplasm. The protein localises to the nucleoid. Functionally, binds to DNA and alters its conformation. May be involved in regulation of gene expression, nucleoid organization and DNA protection. The protein is Nucleoid-associated protein PPA0205 of Cutibacterium acnes (strain DSM 16379 / KPA171202) (Propionibacterium acnes).